The chain runs to 332 residues: RNA polymerase principal sigma factor HrdD (332 aa).

The disordered stretch occupies residues 1-21; it reads MATRAVARRQPAASGETGAAG. Positions 124–137 match the Polymerase core binding motif; that stretch reads DLIQEGNAGLVRAV. Residues 294–313 constitute a DNA-binding region (H-T-H motif); the sequence is LTEVGKQHGLTRERIRQIEK.

Belongs to the sigma-70 factor family.

Its function is as follows. Sigma factors are initiation factors that promote the attachment of RNA polymerase to specific initiation sites and are then released. The chain is RNA polymerase principal sigma factor HrdD (hrdD) from Streptomyces griseus.